The primary structure comprises 239 residues: Guanylate kinase (239 aa).

In terms of domain architecture, Guanylate kinase-like spans Gly-55–Leu-235. Gly-62–Ser-69 serves as a coordination point for ATP.

This sequence belongs to the guanylate kinase family.

It localises to the cytoplasm. It carries out the reaction GMP + ATP = GDP + ADP. In terms of biological role, essential for recycling GMP and indirectly, cGMP. The chain is Guanylate kinase (gmk) from Mycoplasma pneumoniae (strain ATCC 29342 / M129 / Subtype 1) (Mycoplasmoides pneumoniae).